A 155-amino-acid chain; its full sequence is Ribosomal RNA large subunit methyltransferase H (155 aa).

Residues Leu72, Gly103, and 122–127 (LSPLTL) each bind S-adenosyl-L-methionine.

It belongs to the RNA methyltransferase RlmH family. Homodimer.

The protein localises to the cytoplasm. It catalyses the reaction pseudouridine(1915) in 23S rRNA + S-adenosyl-L-methionine = N(3)-methylpseudouridine(1915) in 23S rRNA + S-adenosyl-L-homocysteine + H(+). Specifically methylates the pseudouridine at position 1915 (m3Psi1915) in 23S rRNA. This Haemophilus influenzae (strain PittGG) protein is Ribosomal RNA large subunit methyltransferase H.